The sequence spans 272 residues: tRNA uridine(34) hydroxylase (272 aa).

Positions 121–217 (SRSDVYTIDT…YFKSTGNINN (97 aa)) constitute a Rhodanese domain. Cys-177 functions as the Cysteine persulfide intermediate in the catalytic mechanism.

Belongs to the TrhO family.

It carries out the reaction uridine(34) in tRNA + AH2 + O2 = 5-hydroxyuridine(34) in tRNA + A + H2O. In terms of biological role, catalyzes oxygen-dependent 5-hydroxyuridine (ho5U) modification at position 34 in tRNAs. The protein is tRNA uridine(34) hydroxylase of Ehrlichia ruminantium (strain Welgevonden).